A 129-amino-acid polypeptide reads, in one-letter code: Glycine cleavage system H protein (129 aa).

The Lipoyl-binding domain maps to 24-106 (SYTVGITEHA…YGEGWFFRVM (83 aa)). Lys65 is subject to N6-lipoyllysine.

Belongs to the GcvH family. In terms of assembly, the glycine cleavage system is composed of four proteins: P, T, L and H. It depends on (R)-lipoate as a cofactor.

The glycine cleavage system catalyzes the degradation of glycine. The H protein shuttles the methylamine group of glycine from the P protein to the T protein. The sequence is that of Glycine cleavage system H protein from Shewanella baltica (strain OS185).